A 106-amino-acid polypeptide reads, in one-letter code: UPF0642 protein YBL028C (106 aa).

The span at M1 to N12 shows a compositional bias: polar residues. Disordered regions lie at residues M1–V21 and K52–F106. Over residues D62–R72 the composition is skewed to basic and acidic residues. The segment covering G83–F106 has biased composition (basic residues).

Belongs to the UPF0642 family.

The chain is UPF0642 protein YBL028C from Saccharomyces cerevisiae (strain ATCC 204508 / S288c) (Baker's yeast).